The primary structure comprises 539 residues: Trigger factor (539 aa).

The PPIase FKBP-type domain maps to Gly-163 to Pro-252. Composition is skewed to low complexity over residues Ser-434–Pro-447 and Ala-475–Pro-484. The segment at Ser-434–Glu-539 is disordered. Polar residues predominate over residues Thr-509–Val-528.

Belongs to the FKBP-type PPIase family. Tig subfamily.

The protein localises to the cytoplasm. It carries out the reaction [protein]-peptidylproline (omega=180) = [protein]-peptidylproline (omega=0). Functionally, involved in protein export. Acts as a chaperone by maintaining the newly synthesized protein in an open conformation. Functions as a peptidyl-prolyl cis-trans isomerase. The protein is Trigger factor of Roseiflexus sp. (strain RS-1).